The sequence spans 422 residues: uncharacterized protein (422 aa).

Disordered stretches follow at residues 1 to 21 (MRDN…TTYD), 158 to 218 (TAKS…TEQV), and 246 to 271 (DFGT…PWLT). A compositionally biased stretch (polar residues) spans 11–21 (AGSNTQQTTYD). Low complexity predominate over residues 170–199 (SKSSNGSSSTSTTQRGGSSNENKVKALQVA). Polar residues-rich tracts occupy residues 205–216 (GSQGNSGDQGTE) and 250–261 (APSSSGSGTQDG). Low complexity predominate over residues 262–271 (TPTPWTPWLT).

This sequence belongs to the adhesin P1 family.

This is an uncharacterized protein from Mycoplasma pneumoniae (strain ATCC 29342 / M129 / Subtype 1) (Mycoplasmoides pneumoniae).